The sequence spans 718 residues: Phenylalanine--tRNA ligase beta subunit (718 aa).

One can recognise a tRNA-binding domain in the interval 39-153 (LNEISGIKFG…IFDLESNPLK (115 aa)). Residues 386–460 (SKKTFLDLNY…RFYGLEKLKD (75 aa)) enclose the B5 domain. Mg(2+)-binding residues include Asp438, Asp444, and Asp448.

It belongs to the phenylalanyl-tRNA synthetase beta subunit family. Type 1 subfamily. As to quaternary structure, tetramer of two alpha and two beta subunits. Mg(2+) serves as cofactor.

The protein localises to the cytoplasm. It carries out the reaction tRNA(Phe) + L-phenylalanine + ATP = L-phenylalanyl-tRNA(Phe) + AMP + diphosphate + H(+). This Mesomycoplasma hyopneumoniae (strain 232) (Mycoplasma hyopneumoniae) protein is Phenylalanine--tRNA ligase beta subunit.